We begin with the raw amino-acid sequence, 203 residues long: Thymidine kinase (203 aa).

ATP is bound by residues 9–16 (ATMNAGKT) and 87–90 (DEAQ). The active-site Proton acceptor is glutamate 88. Zn(2+) is bound by residues cysteine 145, cysteine 147, cysteine 181, and histidine 184.

It belongs to the thymidine kinase family. As to quaternary structure, homotetramer.

It localises to the cytoplasm. The enzyme catalyses thymidine + ATP = dTMP + ADP + H(+). The chain is Thymidine kinase from Mesorhizobium japonicum (strain LMG 29417 / CECT 9101 / MAFF 303099) (Mesorhizobium loti (strain MAFF 303099)).